Here is a 348-residue protein sequence, read N- to C-terminus: Rhodopsin (348 aa).

Methionine 1 bears the N-acetylmethionine mark. Residues 1 to 36 lie on the Extracellular side of the membrane; that stretch reads MNGTEGPNFYVPYSNKSGVVRSPYEEPQYYLAEPWM. 2 N-linked (GlcNAc...) asparagine glycosylation sites follow: asparagine 2 and asparagine 15. Residues 37–61 form a helical membrane-spanning segment; the sequence is FSCLAAYMFMLIVLGFPINFLTLYV. Over 62–73 the chain is Cytoplasmic; sequence TIQHKKLRTPLN. A helical transmembrane segment spans residues 74–96; sequence YILLNLAVADLFMVICGFTTTLV. At 97-110 the chain is on the extracellular side; sequence TSLNGYFVFGTTGC. A disulfide bond links cysteine 110 and cysteine 187. A helical membrane pass occupies residues 111 to 133; that stretch reads LVEGFFATTGGEVALWALVVLAI. A 'Ionic lock' involved in activated form stabilization motif is present at residues 134–136; it reads ERY. Residues 134-152 lie on the Cytoplasmic side of the membrane; the sequence is ERYIVVCKPMSNFRFGENH. The chain crosses the membrane as a helical span at residues 153 to 173; that stretch reads AIMGVAFTWIMALACSVPPIF. Over 174 to 202 the chain is Extracellular; sequence GWSRYIPEGMQCSCGIDYYTLNPEFNNES. Position 201 (glutamate 201) interacts with Zn(2+). The helical transmembrane segment at 203–224 threads the bilayer; it reads FVIYMFVVHFIIPLTVIFFCYG. The Cytoplasmic segment spans residues 225-252; the sequence is QLVFTVKEAAAQQQESATTQKAEKEVTR. A helical transmembrane segment spans residues 253–274; that stretch reads MVIIMVIAFLICWVPYASVAFY. Over 275–286 the chain is Extracellular; that stretch reads IFTHQGSDFGPI. Glutamine 279 contributes to the Zn(2+) binding site. The chain crosses the membrane as a helical span at residues 287–308; sequence FMTLPAFFAKSSSIYNPVIYIM. N6-(retinylidene)lysine is present on lysine 296. Residues 309–348 are Cytoplasmic-facing; that stretch reads MNKQFRNCMITTLCCGKNPLGDDEASTTASKTETSQVAPA. S-palmitoyl cysteine attachment occurs at residues cysteine 322 and cysteine 323. Residues 330 to 348 are interaction with SAG; it reads DDEASTTASKTETSQVAPA. At serine 334 the chain carries Phosphoserine. Phosphothreonine is present on residues threonine 335 and threonine 336. The residue at position 338 (serine 338) is a Phosphoserine. Phosphothreonine occurs at positions 340 and 342. Phosphoserine is present on serine 343.

It belongs to the G-protein coupled receptor 1 family. Opsin subfamily. Homodimer. May form a complex composed of RHO, GRK1 and RCVRN in a Ca(2+)-dependent manner; RCVRN prevents the interaction between GRK1 and RHO. Interacts with GRK1. Interacts (phosphorylated form) with SAG. Interacts with GNAT1. Interacts with GNAT3. SAG and G-proteins compete for a common binding site. Interacts with PRCD; the interaction promotes PRCD stability. Forms a complex with ASAP1 and ARF4. Forms a complex with ASAP1, RAB11A, Rabin8/RAB3IP, ARF4 and RAB11FIP3; the complex regulates Golgi-to-cilia rhodopsin/RHO transport in photoreceptors. Post-translationally, phosphorylated on some or all of the serine and threonine residues present in the C-terminal region. Contains one covalently linked retinal chromophore. Upon light absorption, the covalently bound 11-cis-retinal is converted to all-trans-retinal. After hydrolysis of the Schiff base and release of the covalently bound all-trans-retinal, active rhodopsin is regenerated by binding of a fresh molecule of 11-cis-retinal.

The protein resides in the membrane. The protein localises to the cell projection. It is found in the cilium. It localises to the photoreceptor outer segment. Photoreceptor required for image-forming vision at low light intensity. Required for photoreceptor cell viability after birth. Light-induced isomerization of 11-cis to all-trans retinal triggers a conformational change that activates signaling via G-proteins. Subsequent receptor phosphorylation mediates displacement of the bound G-protein alpha subunit by the arrestin SAG and terminates signaling. The chain is Rhodopsin (RHO) from Sminthopsis crassicaudata (Fat-tailed dunnart).